A 386-amino-acid polypeptide reads, in one-letter code: DNA (cytosine-5)-methyltransferase 3-like (386 aa).

The ADD domain maps to 41–173 (EVKANQRNIE…LKAFYDRESE (133 aa)). Residues 52-82 (ICICCGSLQVHTQHPLFEGGICAPCKDKFLD) form a GATA-type; atypical zinc finger. A PHD-type; atypical zinc finger spans residues 93-149 (QSYCSICCSGETLLICGNPDCTRCYCFECVDSLVGPGTSGKVHAMSNWVCYLCLPSS).

In terms of assembly, homodimer. Heterotetramer composed of 1 DNMT3A homodimer and 2 DNMT3L subunits (DNMT3L-DNMT3A-DNMT3A-DNMT3L). Interacts with histone H3 (via N-terminus); interaction is strongly inhibited by methylation at lysine 4 (H3K4me). Interacts with EZH2; the interaction is direct. Interacts with SPOCD1. In terms of tissue distribution, expressed at low levels in several tissues including testis, ovary, and thymus.

It is found in the nucleus. Its function is as follows. Catalytically inactive regulatory factor of DNA methyltransferases that can either promote or inhibit DNA methylation depending on the context. Essential for the function of DNMT3A and DNMT3B: activates DNMT3A and DNMT3B by binding to their catalytic domain. Acts by accelerating the binding of DNA and S-adenosyl-L-methionine (AdoMet) to the methyltransferases and dissociates from the complex after DNA binding to the methyltransferases. Recognizes unmethylated histone H3 lysine 4 (H3K4me0) and induces de novo DNA methylation by recruitment or activation of DNMT3. Plays a key role in embryonic stem cells and germ cells. In germ cells, required for the methylation of imprinted loci together with DNMT3A. In male germ cells, specifically required to methylate retrotransposons, preventing their mobilization. Plays a key role in embryonic stem cells (ESCs) by acting both as an positive and negative regulator of DNA methylation. While it promotes DNA methylation of housekeeping genes together with DNMT3A and DNMT3B, it also acts as an inhibitor of DNA methylation at the promoter of bivalent genes. Interacts with the EZH2 component of the PRC2/EED-EZH2 complex, preventing interaction of DNMT3A and DNMT3B with the PRC2/EED-EZH2 complex, leading to maintain low methylation levels at the promoters of bivalent genes. Promotes differentiation of ESCs into primordial germ cells by inhibiting DNA methylation at the promoter of RHOX5, thereby activating its expression. This chain is DNA (cytosine-5)-methyltransferase 3-like (DNMT3L), found in Homo sapiens (Human).